We begin with the raw amino-acid sequence, 331 residues long: Cathepsin 7 (331 aa).

Positions 1-17 (MTPTVFLSILCLGVALA) are cleaved as a signal peptide. A propeptide spans 18-111 (APAPDYNLDA…GKHIQKRNPK (94 aa)) (activation peptide). The Nuclear localization signal motif lies at 33–50 (KRSNDRTYSPEEEKQRRA). Asn-72 is a glycosylation site (N-linked (GlcNAc...) asparagine). 3 cysteine pairs are disulfide-bonded: Cys-133–Cys-176, Cys-167–Cys-209, and Cys-267–Cys-320. Cys-136 is a catalytic residue. Active-site residues include His-274 and Asn-298.

This sequence belongs to the peptidase C1 family. As to expression, expressed in placenta. Expressed in parietal and spiral artery-associated trophoblast giant cells, most abundantly during the phase of trophoblast invasion. From 14.5 dpc onwards, expressed at lower levels in labyrinth trophoblast cells. Expressed in trophoblast stem cells. Expressed in heart, liver and testis.

The protein localises to the endosome. It localises to the lysosome. Its subcellular location is the cytoplasm. It is found in the perinuclear region. The protein resides in the golgi apparatus. The protein localises to the nucleus. It localises to the secreted. Its subcellular location is the extracellular space. Functionally, involved in trophoblast cell proliferation and differentiation probably by affecting mitotic cell cycle progression. Proteolytic activity and nuclear localization are essential for its role in cell cycle progression. The sequence is that of Cathepsin 7 from Mus musculus (Mouse).